Reading from the N-terminus, the 233-residue chain is 2,3,4,5-tetrahydropyridine-2,6-dicarboxylate N-acetyltransferase (233 aa).

This sequence belongs to the transferase hexapeptide repeat family. DapH subfamily.

It carries out the reaction (S)-2,3,4,5-tetrahydrodipicolinate + acetyl-CoA + H2O = L-2-acetamido-6-oxoheptanedioate + CoA. It functions in the pathway amino-acid biosynthesis; L-lysine biosynthesis via DAP pathway; LL-2,6-diaminopimelate from (S)-tetrahydrodipicolinate (acetylase route): step 1/3. Its function is as follows. Catalyzes the transfer of an acetyl group from acetyl-CoA to tetrahydrodipicolinate. The chain is 2,3,4,5-tetrahydropyridine-2,6-dicarboxylate N-acetyltransferase from Thermosipho africanus (strain TCF52B).